The primary structure comprises 296 residues: NADH-cytochrome b5 reductase 2 (296 aa).

A helical membrane pass occupies residues 12–29 (LPIALGVGAASIATAIIL). One can recognise an FAD-binding FR-type domain in the interval 47 to 151 (NEWIDLPIIK…KGPITKWEWK (105 aa)). 154–189 (SYDSITLLGAGTGINPLYQLVHHIAENPEDNTKIHL) is a binding site for FAD.

The protein belongs to the flavoprotein pyridine nucleotide cytochrome reductase family. FAD serves as cofactor.

The protein resides in the mitochondrion outer membrane. The catalysed reaction is 2 Fe(III)-[cytochrome b5] + NADH = 2 Fe(II)-[cytochrome b5] + NAD(+) + H(+). Functionally, may mediate the reduction of outer membrane cytochrome b5. In Kluyveromyces lactis (strain ATCC 8585 / CBS 2359 / DSM 70799 / NBRC 1267 / NRRL Y-1140 / WM37) (Yeast), this protein is NADH-cytochrome b5 reductase 2 (MCR1).